The sequence spans 350 residues: Ribosomal RNA large subunit methyltransferase M (350 aa).

Residues Ser-184, 217–220 (APGG), Asp-236, Asp-256, and Asp-272 each bind S-adenosyl-L-methionine. Residue Lys-301 is the Proton acceptor of the active site.

This sequence belongs to the class I-like SAM-binding methyltransferase superfamily. RNA methyltransferase RlmE family. RlmM subfamily. As to quaternary structure, monomer.

The protein resides in the cytoplasm. It carries out the reaction cytidine(2498) in 23S rRNA + S-adenosyl-L-methionine = 2'-O-methylcytidine(2498) in 23S rRNA + S-adenosyl-L-homocysteine + H(+). Functionally, catalyzes the 2'-O-methylation at nucleotide C2498 in 23S rRNA. This is Ribosomal RNA large subunit methyltransferase M from Marinomonas sp. (strain MWYL1).